A 450-amino-acid chain; its full sequence is Crinkler effector protein 63 (450 aa).

The signal sequence occupies residues 1–17 (MVKLFCAIVGAAGSAFP). An LQLFLAK domain region spans residues 18–55 (VDIDAGQSAGDLKDAIKAKNPATITCDAKDLQLSLAKT). Positions 58–117 (GAWLPDDDQAALDLEDGKVHEDIQALIDGEKMKATWTIEDVLTANNMTKRKGRAPKSRQI) are DWL domain. An N-linked (GlcNAc...) asparagine glycan is attached at Asn-103. Residues 118–124 (HVLVVVP) carry the HVLVXXP motif motif. Residues 125–450 (EGAFGSASET…RSIPTFSYFS (326 aa)) form an effector domain region. The Nuclear localization signal (NLS) motif lies at 218–224 (QRKRYRR). Residue Asn-342 is glycosylated (N-linked (GlcNAc...) asparagine).

The protein belongs to the Crinkler effector family. In terms of assembly, forms a homodimer via an inverted association manner. Forms heterodimers with CRN79 and CRN115.

It is found in the secreted. The protein resides in the host nucleus. Its subcellular location is the host nucleoplasm. Functionally, secreted effector that, with CRN115, is critical to pathogenesis by modulating host defenses. Induces cell death in plant host cells. Suppresses callose deposition and affects expression of defense-related genes including two salicylic acid (SA) signal-induced and antimicrobial PR genes (PR1 and PR2), and genes involved in jasmonic acid (JA)/ethylene (ET)-mediated defense pathway (ERF1, ORA59, PDF1.2). CRN115 and CRN63 may share the same molecular host targets that are involved in the cell death signal transduction pathway and that their differential activities are dependent on plant nuclear localization or not. Does not affect MAPK activation and BIK1 phosphorylation and acts downstream of the MAPK cascades in PTI signaling. The chain is Crinkler effector protein 63 from Phytophthora sojae (strain P6497) (Soybean stem and root rot agent).